Consider the following 755-residue polypeptide: Polyribonucleotide nucleotidyltransferase (755 aa).

Residues Asp-527 and Asp-533 each contribute to the Mg(2+) site. The 60-residue stretch at 593–652 (PRITTIKVPVDKIGEVIGPKGKMINSITEETGANISIEDDGTVFVGAADGASAQAAIDKI) folds into the KH domain. In terms of domain architecture, S1 motif spans 664 to 733 (GERFLGTVVK…NRGKISLVPV (70 aa)). A disordered region spans residues 734-755 (GEEDAAEAPAPAEAQPADAVTQ). Low complexity predominate over residues 740 to 755 (EAPAPAEAQPADAVTQ).

Belongs to the polyribonucleotide nucleotidyltransferase family. Mg(2+) is required as a cofactor.

The protein localises to the cytoplasm. The enzyme catalyses RNA(n+1) + phosphate = RNA(n) + a ribonucleoside 5'-diphosphate. Involved in mRNA degradation. Catalyzes the phosphorolysis of single-stranded polyribonucleotides processively in the 3'- to 5'-direction. In Mycobacteroides abscessus (strain ATCC 19977 / DSM 44196 / CCUG 20993 / CIP 104536 / JCM 13569 / NCTC 13031 / TMC 1543 / L948) (Mycobacterium abscessus), this protein is Polyribonucleotide nucleotidyltransferase.